The sequence spans 271 residues: Phosphatidate cytidylyltransferase (271 aa).

The next 8 helical transmembrane spans lie at 12–32 (LLPI…ALFI), 53–73 (FGRV…YHLP), 75–95 (LAGA…VLVL), 111–131 (LGMG…LKQW), 136–156 (GLII…YFSG), 174–194 (WEGV…VGLY), 199–219 (LGAL…SIVG), and 251–271 (SLTA…WGAP).

This sequence belongs to the CDS family.

The protein localises to the cell inner membrane. The enzyme catalyses a 1,2-diacyl-sn-glycero-3-phosphate + CTP + H(+) = a CDP-1,2-diacyl-sn-glycerol + diphosphate. It participates in phospholipid metabolism; CDP-diacylglycerol biosynthesis; CDP-diacylglycerol from sn-glycerol 3-phosphate: step 3/3. The sequence is that of Phosphatidate cytidylyltransferase (cdsA) from Pseudomonas aeruginosa (strain ATCC 15692 / DSM 22644 / CIP 104116 / JCM 14847 / LMG 12228 / 1C / PRS 101 / PAO1).